Consider the following 300-residue polypeptide: 4-hydroxy-tetrahydrodipicolinate synthase (300 aa).

Residue T55 coordinates pyruvate. Catalysis depends on Y143, which acts as the Proton donor/acceptor. Catalysis depends on K171, which acts as the Schiff-base intermediate with substrate. Residue I211 coordinates pyruvate.

It belongs to the DapA family. Homotetramer; dimer of dimers.

It localises to the cytoplasm. The catalysed reaction is L-aspartate 4-semialdehyde + pyruvate = (2S,4S)-4-hydroxy-2,3,4,5-tetrahydrodipicolinate + H2O + H(+). It participates in amino-acid biosynthesis; L-lysine biosynthesis via DAP pathway; (S)-tetrahydrodipicolinate from L-aspartate: step 3/4. Functionally, catalyzes the condensation of (S)-aspartate-beta-semialdehyde [(S)-ASA] and pyruvate to 4-hydroxy-tetrahydrodipicolinate (HTPA). The chain is 4-hydroxy-tetrahydrodipicolinate synthase from Mycobacterium leprae (strain Br4923).